The following is a 790-amino-acid chain: Mitochondrial intermediate peptidase (790 aa).

A mitochondrion-targeting transit peptide spans 1–29 (MLKRLARNNSSPWICSRCLQQSQRQRRFN). His-570 lines the Zn(2+) pocket. The active site involves Glu-571. Zn(2+) is bound by residues His-574 and His-577.

The protein belongs to the peptidase M3 family. Zn(2+) is required as a cofactor.

The protein resides in the mitochondrion matrix. The enzyme catalyses Release of an N-terminal octapeptide as second stage of processing of some proteins imported into the mitochondrion.. Functionally, cleaves proteins, imported into the mitochondrion, to their mature size. While most mitochondrial precursor proteins are processed to the mature form in one step by mitochondrial processing peptidase (MPP), the sequential cleavage by MIP of an octapeptide after initial processing by MPP is a required step for a subgroup of nuclear-encoded precursor proteins destined for the matrix or the inner membrane. The chain is Mitochondrial intermediate peptidase (OCT1) from Phaeosphaeria nodorum (strain SN15 / ATCC MYA-4574 / FGSC 10173) (Glume blotch fungus).